Consider the following 171-residue polypeptide: Large ribosomal subunit protein bL17 (171 aa).

The disordered stretch occupies residues Pro-130–Lys-171. Over residues Lys-133–Lys-149 the composition is skewed to basic residues. Low complexity predominate over residues Ala-150–Ala-165.

The protein belongs to the bacterial ribosomal protein bL17 family. Part of the 50S ribosomal subunit. Contacts protein L32.

The protein is Large ribosomal subunit protein bL17 of Opitutus terrae (strain DSM 11246 / JCM 15787 / PB90-1).